The primary structure comprises 266 residues: Undecaprenyl-diphosphatase (266 aa).

A run of 8 helical transmembrane segments spans residues 1–21, 43–63, 83–103, 114–134, 144–164, 186–206, 219–239, and 245–265; these read MNIFQTIVLALVQGLSEFLPI, FDVVVHMGTLSAVIFYYQAMI, SKLAWGVLLGTIPVGLVGMIF, VEIIAYATLVFGVLLGFASWF, TISWVDIGFIGMAQTLALIPG, IQFAFLLSIPVISLSLILILI, LLAMGFVVAAISAYVTIVFFI, and VGMMPFVIYRLTLGIFLFFFI.

The protein belongs to the UppP family.

It localises to the cell inner membrane. It catalyses the reaction di-trans,octa-cis-undecaprenyl diphosphate + H2O = di-trans,octa-cis-undecaprenyl phosphate + phosphate + H(+). Functionally, catalyzes the dephosphorylation of undecaprenyl diphosphate (UPP). Confers resistance to bacitracin. This is Undecaprenyl-diphosphatase from Ruthia magnifica subsp. Calyptogena magnifica.